The primary structure comprises 551 residues: PA-phosphatase related-family protein DDB_G0268928 (551 aa).

2 stretches are compositionally biased toward polar residues: residues 26 to 47 (TESL…SGKD) and 137 to 152 (KYNT…SSNK). 2 disordered regions span residues 26-50 (TESL…DYSS) and 123-172 (KGED…NNNN). The span at 153–171 (TQTTVLNNSTTSSNNINNN) shows a compositional bias: low complexity. 7 consecutive transmembrane segments (helical) span residues 211–231 (SYSD…SIIY), 232–252 (SLLV…LVFI), 273–293 (LAVG…AVVL), 346–366 (ILQL…IYIL), 393–413 (MFIC…LIFP), 474–494 (ILPA…IATM), and 500–520 (YFVD…YGGF).

The protein belongs to the PA-phosphatase related phosphoesterase family.

The protein resides in the membrane. This is PA-phosphatase related-family protein DDB_G0268928 from Dictyostelium discoideum (Social amoeba).